The sequence spans 88 residues: Small ribosomal subunit protein bS20 (88 aa).

This sequence belongs to the bacterial ribosomal protein bS20 family.

Its function is as follows. Binds directly to 16S ribosomal RNA. The chain is Small ribosomal subunit protein bS20 from Renibacterium salmoninarum (strain ATCC 33209 / DSM 20767 / JCM 11484 / NBRC 15589 / NCIMB 2235).